A 664-amino-acid polypeptide reads, in one-letter code: Alpha-1,4-glucan:maltose-1-phosphate maltosyltransferase (664 aa).

Positions 261, 321, and 356 each coordinate alpha-maltose 1-phosphate. The active-site Nucleophile is the D393. Residue N394 coordinates alpha-maltose 1-phosphate. E422 acts as the Proton donor in catalysis. Position 533-534 (533-534 (KY)) interacts with alpha-maltose 1-phosphate.

Belongs to the glycosyl hydrolase 13 family. GlgE subfamily. As to quaternary structure, homodimer.

It catalyses the reaction alpha-maltose 1-phosphate + [(1-&gt;4)-alpha-D-glucosyl](n) = [(1-&gt;4)-alpha-D-glucosyl](n+2) + phosphate. Maltosyltransferase that uses maltose 1-phosphate (M1P) as the sugar donor to elongate linear or branched alpha-(1-&gt;4)-glucans. Is involved in a branched alpha-glucan biosynthetic pathway from trehalose, together with TreS, Mak and GlgB. The protein is Alpha-1,4-glucan:maltose-1-phosphate maltosyltransferase of Pseudomonas aeruginosa (strain ATCC 15692 / DSM 22644 / CIP 104116 / JCM 14847 / LMG 12228 / 1C / PRS 101 / PAO1).